The chain runs to 83 residues: Prolactin-releasing peptide (83 aa).

Residues 1–21 (MALKTWLLCLLLLSLVLPGAS) form the signal peptide. The residue at position 52 (Phe-52) is a Phenylalanine amide. Positions 57 to 83 (ATPRDVTGLGQLSCLPLDGRTKFSQRG) are excised as a propeptide.

As to expression, widely expressed, with highest levels in medulla oblongata and hypothalamus.

The protein resides in the secreted. Its function is as follows. Stimulates prolactin (PRL) release and regulates the expression of prolactin through its receptor GPR10. May stimulate lactotrophs directly to secrete PRL. The chain is Prolactin-releasing peptide (Prlh) from Rattus norvegicus (Rat).